Consider the following 688-residue polypeptide: MTTQNFLAEIGTEELPPKALKKLATAFAENVEQELNQAGLAFEKVEWFAAPRRLAVKVLGLAEAQPSKQVEKRGPAVSAAFDAEGKPTKAAEGWARGCGITVEQAERLSTDKGEWLVHRAVIEGQLTKNLLVGIIDKALAGLPIPKTMRWGDKTEQFVRPVHTVTLLFGADLIEGEILGVASGRTVRGHRFLGEREFSLDHADQYPQLLKERGSVVADFNERKALILATSREKATALGGVADIEEELLEEVTSLVEYPNVLTAKFEERFLAVPAEALVYTMKGDQKYFPIYDKDGKLLPHFIFVSNINPDDPSKIIEGNEKVVRPRLTDAEFFFKTDLKQKLEDRLPRLETVLFQQQLGTLRDKTARIEALAGEIAAQIGADQTKAKRAGLLSKCDLMTNMVFEFTDTQGVMGMHYARHDGEDEDVAVALNEQYMPRFAGDTLPNSLVACSVALADKIDTLTGIFGIGQSPKGSADPFALRRAALGCLRIIVEKNLPLDLADIVAKATALFGDKLTNKNVVDEVVDFMLGRFRAWYESEGIAVDVIQSVLARRPTKPADFDARVRAVSHFRTLDSAEALAAANKRVSNILAKADIAIGEIDLGVCVESAEKTLAEAVLALKGEVQPLIAQGDYTAVLDKLANLRQPIDAFFDGVMVNVEEQTLRQNRLAILSTLQNLFLQVADISVLQ.

This sequence belongs to the class-II aminoacyl-tRNA synthetase family. As to quaternary structure, tetramer of two alpha and two beta subunits.

The protein resides in the cytoplasm. It catalyses the reaction tRNA(Gly) + glycine + ATP = glycyl-tRNA(Gly) + AMP + diphosphate. This is Glycine--tRNA ligase beta subunit from Histophilus somni (strain 129Pt) (Haemophilus somnus).